Consider the following 146-residue polypeptide: Large ribosomal subunit protein bL21 (146 aa).

Basic residues predominate over residues 95–104 (PKKKTRRKMG). Positions 95–146 (PKKKTRRKMGHRQELTRVMVKSISISKSTPKSSPKTEATKKSTSSKASKPEN) are disordered. A compositionally biased stretch (low complexity) spans 115–146 (KSISISKSTPKSSPKTEATKKSTSSKASKPEN).

The protein belongs to the bacterial ribosomal protein bL21 family. In terms of assembly, part of the 50S ribosomal subunit. Contacts protein L20.

Functionally, this protein binds to 23S rRNA in the presence of protein L20. The protein is Large ribosomal subunit protein bL21 of Prochlorococcus marinus (strain MIT 9515).